Consider the following 442-residue polypeptide: MFS transporter asaE (442 aa).

Positions 1–10 (MDRSRTSSQG) are enriched in polar residues. The disordered stretch occupies residues 1-43 (MDRSRTSSQGRDVLPPRGDEGRISPSLDKEKSPGPEDQPDAPP). Over residues 17–34 (RGDEGRISPSLDKEKSPG) the composition is skewed to basic and acidic residues. Helical transmembrane passes span 47-67 (LTAW…FGWV), 89-109 (TISW…PIVG), 119-139 (YLII…SIST), 150-170 (ICSA…VSAW), 177-197 (IAFA…PIMV), 206-226 (FGWS…IAIV), 252-272 (PVFI…FIPI), 288-307 (LASY…RLGA), 319-339 (IFIV…IPAT), 342-362 (APII…VSLS), 381-401 (LLFL…GAIL), and 413-433 (IFSG…RIVG).

It belongs to the major facilitator superfamily. Monocarboxylate porter (TC 2.A.1.13) family.

The protein resides in the cell membrane. Its pathway is secondary metabolite biosynthesis. Functionally, MFS transporter; part of the gene cluster that mediates the biosynthesis of aspergillic acid. Probably involved in aspergillic acid metabolism and transport. This Aspergillus flavus (strain ATCC 200026 / FGSC A1120 / IAM 13836 / NRRL 3357 / JCM 12722 / SRRC 167) protein is MFS transporter asaE.